Reading from the N-terminus, the 75-residue chain is Protein CYSTEINE-RICH TRANSMEMBRANE MODULE 5 (75 aa).

A disordered region spans residues 1–29 (MSQYSQNQYAGAYPTPPVSTGPYVAPPPL). Pro residues predominate over residues 14–29 (PTPPVSTGPYVAPPPL). A helical membrane pass occupies residues 52 to 69 (AADGFLKGCLATMLACCV).

The protein belongs to the CYSTM1 family. Heterodimers. Interacts with CYSTM7 and WIH1/CYSTM13. Mostly expressed in roots, stems, rosette leaves and siliques and, to a lower extent, in flowers and cauline leaves.

It localises to the cell membrane. Its subcellular location is the nucleus. Functionally, involved in resistance to abiotic stress. The protein is Protein CYSTEINE-RICH TRANSMEMBRANE MODULE 5 of Arabidopsis thaliana (Mouse-ear cress).